We begin with the raw amino-acid sequence, 346 residues long: Golgi to ER traffic protein 4 (346 aa).

A disordered region spans residues 317–346; the sequence is GQNQGGSRRTPQGRSQSKTVEAPPASMELD. Positions 321 to 335 are enriched in polar residues; it reads GGSRRTPQGRSQSKT.

It belongs to the GET4 family. In terms of assembly, component of the get4/get5/sgt2 sorting complex.

It localises to the cytoplasm. Its function is as follows. Component of the get4/get5/sgt2 sorting complex involved in the GET (guided entry of TA proteins) pathway that leads to the insertion of tail-anchored (TA) proteins into the endoplasmic reticulum. Get4 and get5 form an obligate complex that catalyzes the transfer of tail-anchored proteins destined to the endoplasmic reticulum from sgt2 to the cytosolic targeting factor which then targets the TA protein to the ER membrane via get1/get2. In Aspergillus fumigatus (strain ATCC MYA-4609 / CBS 101355 / FGSC A1100 / Af293) (Neosartorya fumigata), this protein is Golgi to ER traffic protein 4.